Reading from the N-terminus, the 537-residue chain is Multidrug resistance protein Stp (537 aa).

14 helical membrane-spanning segments follow: residues 6-26, 46-66, 77-97, 104-124, 136-156, 163-183, 200-220, 223-243, 262-282, 300-320, 327-347, 352-372, 397-417, and 478-498; these read LLTL…ALIV, WVVA…ATLA, IGVS…SIAV, AQGL…SAAF, IWTA…GLLV, SIFY…LCYV, LLFI…PQIG, SVQT…FVWL, YALA…MLLL, LMIL…GHLV, VPIL…IFSE, ALVL…LTPI, AIGS…WLSA, and VALL…WRWF.

This sequence belongs to the major facilitator superfamily. EmrB family.

The protein resides in the cell membrane. In Mycobacterium tuberculosis (strain CDC 1551 / Oshkosh), this protein is Multidrug resistance protein Stp (stp).